The chain runs to 137 residues: Large ribosomal subunit protein uL16 (137 aa).

A compositionally biased stretch (basic residues) spans 1-17; the sequence is MLQPKRTKFRKQQKGRN. A disordered region spans residues 1–24; sequence MLQPKRTKFRKQQKGRNRGLAQSG.

The protein belongs to the universal ribosomal protein uL16 family. Part of the 50S ribosomal subunit.

Functionally, binds 23S rRNA and is also seen to make contacts with the A and possibly P site tRNAs. This Dichelobacter nodosus (strain VCS1703A) protein is Large ribosomal subunit protein uL16.